Here is a 273-residue protein sequence, read N- to C-terminus: Octanoyltransferase (273 aa).

One can recognise a BPL/LPL catalytic domain in the interval 35–254 (DRVPDTCLLL…HLRDILENAE (220 aa)). Substrate-binding positions include 73–80 (RGGKITWH), 184–186 (AIG), and 197–199 (GFA). C215 functions as the Acyl-thioester intermediate in the catalytic mechanism.

It belongs to the LipB family.

Its subcellular location is the cytoplasm. The enzyme catalyses octanoyl-[ACP] + L-lysyl-[protein] = N(6)-octanoyl-L-lysyl-[protein] + holo-[ACP] + H(+). It participates in protein modification; protein lipoylation via endogenous pathway; protein N(6)-(lipoyl)lysine from octanoyl-[acyl-carrier-protein]: step 1/2. Catalyzes the transfer of endogenously produced octanoic acid from octanoyl-acyl-carrier-protein onto the lipoyl domains of lipoate-dependent enzymes. Lipoyl-ACP can also act as a substrate although octanoyl-ACP is likely to be the physiological substrate. This is Octanoyltransferase from Streptomyces griseus subsp. griseus (strain JCM 4626 / CBS 651.72 / NBRC 13350 / KCC S-0626 / ISP 5235).